The sequence spans 131 residues: SPbeta prophage-derived uncharacterized protein YoqY (131 aa).

This chain is SPbeta prophage-derived uncharacterized protein YoqY (yoqY), found in Bacillus subtilis (strain 168).